Reading from the N-terminus, the 249-residue chain is Probable transcriptional regulatory protein CYA_2259 (249 aa).

This sequence belongs to the TACO1 family.

It localises to the cytoplasm. This Synechococcus sp. (strain JA-3-3Ab) (Cyanobacteria bacterium Yellowstone A-Prime) protein is Probable transcriptional regulatory protein CYA_2259.